The following is an 830-amino-acid chain: MLNEGKVLPVDISSEMKKCYIDYAMSVIVSRALPDVRDGLKPVHRRILYSMHELGLTPEKGYRKCARIVGDVLGKYHPHGDSSVYGALVRLAQDFNLRYTVVDGHGNFGSVDGDSAAAMRYTEAKMNKIALEMVRDIGKNTVDFIPNFDGEEKEPVVLPSRFPNLLVNGSAGIAVGMATNIPPHNLGEVIDGITMLIDNPEATILELMAQIKGPDFPTAGIIMGKSGIRAAYETGRGKITVRAKSEIEVEDNGKQKIIITEIPYQVNKARLVESIADLVKDKRIVGISDLRDESDRDGMRIVIEIKKDANSNIILNQLYKHTRLQDTFGINMLALVDNRPEVLNLKQILQHYIKFQEQVIRRRTEFDLEKASARAHILEGLKIALDHIDEVISLIRGSKTAQEAKLGLMDKFGLSEKQAQAILDLKLQRLTGLEREKIEDEYNELMKTIAELKSILADENKILAIIRDELNEIKAKYGDERKTAIERAENDIDIEDLIQEENVVITLTHAGYIKRINADTYTSQKRGGRGIQAMTTKEDDFVENIFITSTHNNILFFTNKGRMYKLKAYQIPEAGRAAKGTNVVNLLQLDPNEKIQAVISIKEFDEESFLVMCTKKGIIKKTVVGMYKNIRKSGLIAINLNDDDELVSVRITKGDDDIIIVTNKGLAIRFNEVDVRPLGRNALGVKGITLKEDDFVVGMEVPNQESDVLVVSENGFGKRTHVGEYKCQHRGGKGLITYKVSDKTGKLVGVRMVEDGDELMLINNLGIAIRINVSDISTTSRNAMGVTLMRNNGDEKVLALAKINKDDSEQLEDSEEVSEVHDAEENNSEE.

A Topo IIA-type catalytic domain is found at 33-497 (LPDVRDGLKP…AENDIDIEDL (465 aa)). Residue Tyr121 is the O-(5'-phospho-DNA)-tyrosine intermediate of the active site. The GyrA-box signature appears at 524-530 (QKRGGRG). The tract at residues 805–830 (KDDSEQLEDSEEVSEVHDAEENNSEE) is disordered.

It belongs to the type II topoisomerase GyrA/ParC subunit family. Heterotetramer, composed of two GyrA and two GyrB chains. In the heterotetramer, GyrA contains the active site tyrosine that forms a transient covalent intermediate with DNA, while GyrB binds cofactors and catalyzes ATP hydrolysis.

The protein resides in the cytoplasm. The enzyme catalyses ATP-dependent breakage, passage and rejoining of double-stranded DNA.. In terms of biological role, a type II topoisomerase that negatively supercoils closed circular double-stranded (ds) DNA in an ATP-dependent manner to modulate DNA topology and maintain chromosomes in an underwound state. Negative supercoiling favors strand separation, and DNA replication, transcription, recombination and repair, all of which involve strand separation. Also able to catalyze the interconversion of other topological isomers of dsDNA rings, including catenanes and knotted rings. Type II topoisomerases break and join 2 DNA strands simultaneously in an ATP-dependent manner. The sequence is that of DNA gyrase subunit A from Clostridium acetobutylicum (strain ATCC 824 / DSM 792 / JCM 1419 / IAM 19013 / LMG 5710 / NBRC 13948 / NRRL B-527 / VKM B-1787 / 2291 / W).